A 151-amino-acid polypeptide reads, in one-letter code: Large ribosomal subunit protein uL13 (151 aa).

Belongs to the universal ribosomal protein uL13 family. Part of the 50S ribosomal subunit.

This protein is one of the early assembly proteins of the 50S ribosomal subunit, although it is not seen to bind rRNA by itself. It is important during the early stages of 50S assembly. In Picosynechococcus sp. (strain ATCC 27264 / PCC 7002 / PR-6) (Agmenellum quadruplicatum), this protein is Large ribosomal subunit protein uL13.